The sequence spans 695 residues: MVPTSLSPDDTSDPVPRSSSDIQGFCHNYPLRRHKYEDQANKGSQQCRDDWEQYIGPIERWGCGNPWEGHFAAVVLPFCRPDRIAIISYCFEYAFMYDNVVESAAKSTVNINRDDIALDETEYRTVRSVTGTKQIQSKMLLDLLSIDPVCAEVVIDSWKTMIDTTVKQDKTRTFSNLEEYVDFRIIDTGAPFVDTLMRFGMNILLTPEEEELVAPIVKPCYAALGLANDYFSFDIEWEEFQQPESNQSTMTNAVWLFMQWHQVDEQEAKRRVRQVTNDYEREYQQRVRDFISGEGKSNTKLQLYLTALGYQIPGNIAWSLRCPRYHPWLCEEGSALLRASMDEARDVCNEGKRRSISGDSISSESSVWSGASDRSARSSVSSAPSLDEGKEPDRVMLGTEHLLGPAEYIASLPSKGVREAFIDALNVWLVLPDRFVGVIKSIAKTLHNASLMLDDIEDGSPLRRGQPATHTIFGQALTINSANFVLIQAMDQVRQLEDSRCLDIFVEEMRNLFIGQSFDLYWTRQDECPSEEEYREMIRQKTGGLFRLVARLMMQKATLKKNQHISLEPLVDLMGEYFQIRDDYKNLTEEYTGQKGFCEDLDEGKFSFPLIHAHKLLPEWSEIRLLLQQGRQSGGLDVTQKQLVLGRLHDSGSMAYTEKTLRGLMGEIRLRIDQVEKESGCSNWVLKLLVHRLEV.

The tract at residues 1–23 (MVPTSLSPDDTSDPVPRSSSDIQ) is disordered. The tract at residues 7–332 (SPDDTSDPVP…PRYHPWLCEE (326 aa)) is terpene cyclase. Residue aspartate 98 participates in Mg(2+) binding. Substrate-binding positions include aspartate 98, 184–187 (RIID), asparagine 228, 232–236 (SFDIE), and 324–325 (RY). Residues 98–102 (DNVVE) carry the DDXXD 1 motif. An NSE/DTE motif is present at residues 228–236 (NDYFSFDIE). Positions 353–392 (RRSISGDSISSESSVWSGASDRSARSSVSSAPSLDEGKEP) are disordered. Low complexity predominate over residues 357–385 (SGDSISSESSVWSGASDRSARSSVSSAPS). Isopentenyl diphosphate-binding residues include lysine 415, arginine 418, and histidine 447. Mg(2+) contacts are provided by aspartate 454 and aspartate 458. Residues 454-458 (DDIED) carry the DDXXD 2 motif. Arginine 463 lines the dimethylallyl diphosphate pocket. Residue arginine 464 participates in isopentenyl diphosphate binding. Dimethylallyl diphosphate contacts are provided by lysine 541, threonine 542, glutamine 579, asparagine 586, lysine 595, and lysine 605.

It in the N-terminal section; belongs to the terpene synthase family. The protein in the C-terminal section; belongs to the FPP/GGPP synthase family. As to quaternary structure, hexamer. It depends on Mg(2+) as a cofactor.

The catalysed reaction is isopentenyl diphosphate + (2E,6E)-farnesyl diphosphate = (2E,6E,10E)-geranylgeranyl diphosphate + diphosphate. It catalyses the reaction (2E,6E,10E)-geranylgeranyl diphosphate = variediene + diphosphate. It functions in the pathway secondary metabolite biosynthesis; terpenoid biosynthesis. Its function is as follows. Bifunctional terpene synthase converts DMAPP and IPP, and also GGPP, into variediene as a single product. The C-terminal prenyltransferase domain of AbVS catalyzes formation of GGPP, whereas the N-terminal terpene cyclase domain catalyzes the cyclization of GGPP to variediene. This Aspergillus brasiliensis (strain CBS 101740 / IMI 381727 / IBT 21946) protein is Variediene synthase.